The primary structure comprises 102 residues: Thioredoxin (102 aa).

The Thioredoxin domain occupies 1-102 (MVQVVSQENF…SLIKLISKHQ (102 aa)). A disulfide bridge connects residues cysteine 28 and cysteine 31.

It belongs to the thioredoxin family.

Its function is as follows. Participates in various redox reactions through the reversible oxidation of its active center dithiol to a disulfide and catalyzes dithiol-disulfide exchange reactions. This is Thioredoxin (trxA) from Chlamydia trachomatis serovar D (strain ATCC VR-885 / DSM 19411 / UW-3/Cx).